A 421-amino-acid polypeptide reads, in one-letter code: Serine--tRNA ligase (421 aa).

227-229 serves as a coordination point for L-serine; the sequence is TSE. ATP contacts are provided by residues 257–259 and Val-273; that span reads RRE. Residue Glu-280 coordinates L-serine. An ATP-binding site is contributed by 344 to 347; sequence ELTS. Residue Thr-379 participates in L-serine binding.

It belongs to the class-II aminoacyl-tRNA synthetase family. Type-1 seryl-tRNA synthetase subfamily. In terms of assembly, homodimer. The tRNA molecule binds across the dimer.

The protein localises to the cytoplasm. The enzyme catalyses tRNA(Ser) + L-serine + ATP = L-seryl-tRNA(Ser) + AMP + diphosphate + H(+). The catalysed reaction is tRNA(Sec) + L-serine + ATP = L-seryl-tRNA(Sec) + AMP + diphosphate + H(+). It participates in aminoacyl-tRNA biosynthesis; selenocysteinyl-tRNA(Sec) biosynthesis; L-seryl-tRNA(Sec) from L-serine and tRNA(Sec): step 1/1. Catalyzes the attachment of serine to tRNA(Ser). Is also able to aminoacylate tRNA(Sec) with serine, to form the misacylated tRNA L-seryl-tRNA(Sec), which will be further converted into selenocysteinyl-tRNA(Sec). The sequence is that of Serine--tRNA ligase from Leifsonia xyli subsp. xyli (strain CTCB07).